Reading from the N-terminus, the 722-residue chain is Lysophospholipid acyltransferase 6 (722 aa).

5 helical membrane-spanning segments follow: residues 25-45 (MVGL…ALFL), 62-84 (LRHT…QQAI), 104-123 (IVQR…VHLM), 180-200 (ALEY…PLVF), and 243-263 (KVVG…IYPV). Active-site residues include Asn349 and His381. Helical transmembrane passes span 378–398 (AVWH…AVVV), 424–444 (ILTC…FVLL), and 452–472 (LYLR…FILP). Polar residues-rich tracts occupy residues 485 to 511 (NGNG…STAA) and 549 to 570 (VEQP…QQQP). Disordered regions lie at residues 485 to 582 (NGNG…PTCA) and 650 to 687 (NGAI…DLHP).

It belongs to the membrane-bound acyltransferase family.

It is found in the endoplasmic reticulum. The protein localises to the membrane. The catalysed reaction is a 1-acyl-sn-glycero-3-phospho-L-serine + an acyl-CoA = a 1,2-diacyl-sn-glycero-3-phospho-L-serine + CoA. It carries out the reaction 1-(9Z-octadecenoyl)-sn-glycero-3-phospho-L-serine + (9Z)-hexadecenoyl-CoA = 1-(9Z-octadecenoyl)-2-(9Z-hexadecenoyl)-sn-glycero-3-phospho-L-serine + CoA. It catalyses the reaction 1-(9Z-octadecenoyl)-sn-glycero-3-phospho-L-serine + (9Z)-octadecenoyl-CoA = 1,2-di-(9Z)-octadecenoyl-sn-glycero-3-phospho-L-serine + CoA. The enzyme catalyses a 1-acyl-sn-glycero-3-phosphocholine + an acyl-CoA = a 1,2-diacyl-sn-glycero-3-phosphocholine + CoA. The catalysed reaction is 1-hexadecanoyl-sn-glycero-3-phosphocholine + (9Z)-octadecenoyl-CoA = 1-hexadecanoyl-2-(9Z-octadecenoyl)-sn-glycero-3-phosphocholine + CoA. It carries out the reaction (9Z)-hexadecenoyl-CoA + 1-hexadecanoyl-sn-glycero-3-phosphocholine = 1-hexadecanoyl-2-(9Z-hexadecenoyl)-sn-glycero-3-phosphocholine + CoA. It catalyses the reaction a 1-acyl-sn-glycero-3-phosphoethanolamine + an acyl-CoA = a 1,2-diacyl-sn-glycero-3-phosphoethanolamine + CoA. The enzyme catalyses 1-hexadecanoyl-sn-glycero-3-phosphoethanolamine + (9Z)-octadecenoyl-CoA = 1-hexadecanoyl-2-(9Z-octadecenoyl)-sn-glycero-3-phosphoethanolamine + CoA. The catalysed reaction is 1-hexadecanoyl-sn-glycero-3-phosphoethanolamine + (9Z,12Z)-octadecadienoyl-CoA = 1-hexadecanoyl-2-(9Z,12Z-octadecadienoyl)-sn-glycero-3-phosphoethanolamine + CoA. It carries out the reaction 1-hexadecanoyl-sn-glycero-3-phosphoethanolamine + (9Z)-hexadecenoyl-CoA = 1-hexadecanoyl-2-(9Z)-hexadecenoyl-sn-glycero-3-phosphoethanolamine + CoA. It catalyses the reaction 1-(9Z-octadecenoyl)-sn-glycero-3-phospho-(1'-sn-glycerol) + (9Z)-octadecenoyl-CoA = 1,2-di-(9Z-octadecenoyl)-sn-glycero-3-phospho-(1'-sn-glycerol) + CoA. It participates in lipid metabolism; phospholipid metabolism. Acyltransferase with broad-specificity, that mediates the acylation of lysophospholipids to produce phospholipids (glycerophospholipids). Converts lysophosphatidylserine (1-acyl-2-hydroxy-sn-glycero-3-phospho-L-serine or LPS) to phosphatidylserine (1,2-diacyl-sn-glycero-3-phospho-L-serine or PS) (LPSAT activity), lysophosphatidylcholine (1-acyl-sn-glycero-3-phosphocholine or LPC) to phosphatidylcholine (1,2-diacyl-sn-glycero-3-phosphocholine or PC) (LPCAT activity), also lysophosphatidylethanolamine (1-acyl-sn-glycero-3-phosphochethanolamine or LPE) to phosphatidylchethanolamine (LPEAT activity) and lysophosphatidylglycerol (1-acyl-2-hydroxy-sn-glycero-3-phospho-(1'-sn-glycerol) or LPG) to phosphatidylglycerol (1,2-diacyl-sn-glycero-3-phospho-(1'-sn-glycerol) or PG) (LPGAT activity). Has a preference for unsaturated fatty acids of at least 16 carbons such as oleoyl-CoA ((9Z)-octadecenoyl-CoA) and palmitoleoyl-CoA ((9Z)-hexadecenoyl-CoA). Glycerophospholipids are important structural and functional components of cellular membrane, acyl-chain remodeling regulates the molecular species distribution of glycerophospholipids which can affect membrane fluidity and curvature. Essential for fertility and viability together with Nessy protein (Nes). This is Lysophospholipid acyltransferase 6 from Drosophila melanogaster (Fruit fly).